Consider the following 418-residue polypeptide: Tyrosine--tRNA ligase (418 aa).

Tyr-34 is a binding site for L-tyrosine. The 'HIGH' region motif lies at Pro-39–His-48. Residues Tyr-169 and Gln-173 each coordinate L-tyrosine. A 'KMSKS' region motif is present at residues Lys-229–Ser-233. Lys-232 lines the ATP pocket. The S4 RNA-binding domain occupies Leu-352–Tyr-418.

It belongs to the class-I aminoacyl-tRNA synthetase family. TyrS type 1 subfamily. In terms of assembly, homodimer.

It is found in the cytoplasm. The catalysed reaction is tRNA(Tyr) + L-tyrosine + ATP = L-tyrosyl-tRNA(Tyr) + AMP + diphosphate + H(+). In terms of biological role, catalyzes the attachment of tyrosine to tRNA(Tyr) in a two-step reaction: tyrosine is first activated by ATP to form Tyr-AMP and then transferred to the acceptor end of tRNA(Tyr). This is Tyrosine--tRNA ligase from Streptococcus pyogenes serotype M18 (strain MGAS8232).